We begin with the raw amino-acid sequence, 452 residues long: tRNA modification GTPase MnmE (452 aa).

(6S)-5-formyl-5,6,7,8-tetrahydrofolate is bound by residues arginine 23, glutamate 80, and lysine 119. Residues glycine 215–glycine 374 enclose the TrmE-type G domain. Asparagine 225 provides a ligand contact to K(+). GTP contacts are provided by residues asparagine 225–serine 230, threonine 244–threonine 250, and aspartate 269–glycine 272. Residue serine 229 participates in Mg(2+) binding. Residues threonine 244, valine 246, and threonine 249 each coordinate K(+). Residue threonine 250 participates in Mg(2+) binding. Lysine 452 contributes to the (6S)-5-formyl-5,6,7,8-tetrahydrofolate binding site.

Belongs to the TRAFAC class TrmE-Era-EngA-EngB-Septin-like GTPase superfamily. TrmE GTPase family. Homodimer. Heterotetramer of two MnmE and two MnmG subunits. K(+) serves as cofactor.

Its subcellular location is the cytoplasm. In terms of biological role, exhibits a very high intrinsic GTPase hydrolysis rate. Involved in the addition of a carboxymethylaminomethyl (cmnm) group at the wobble position (U34) of certain tRNAs, forming tRNA-cmnm(5)s(2)U34. In Nitrosospira multiformis (strain ATCC 25196 / NCIMB 11849 / C 71), this protein is tRNA modification GTPase MnmE.